An 823-amino-acid polypeptide reads, in one-letter code: DNA topoisomerase 4 subunit A (823 aa).

The Topo IIA-type catalytic domain maps to 30–496; that stretch reads LPDIRDGLKP…KAIEIDTASL (467 aa). The O-(5'-phospho-DNA)-tyrosine intermediate role is filled by Y118.

This sequence belongs to the type II topoisomerase GyrA/ParC subunit family. ParC type 2 subfamily. As to quaternary structure, heterotetramer composed of ParC and ParE.

Its subcellular location is the cell membrane. It carries out the reaction ATP-dependent breakage, passage and rejoining of double-stranded DNA.. Its activity is regulated as follows. Inhibited by quinolones, such as levofloxacin. In terms of biological role, topoisomerase IV is essential for chromosome segregation. It relaxes supercoiled DNA. Performs the decatenation events required during the replication of a circular DNA molecule. The sequence is that of DNA topoisomerase 4 subunit A from Streptococcus pneumoniae serotype 4 (strain ATCC BAA-334 / TIGR4).